Consider the following 509-residue polypeptide: GMP synthase [glutamine-hydrolyzing] (509 aa).

Residues 4–193 enclose the Glutamine amidotransferase type-1 domain; sequence KILILDFGSQ…VVHICGCSQD (190 aa). The active-site Nucleophile is the Cys-79. Catalysis depends on residues His-167 and Glu-169. The 191-residue stretch at 194-384 folds into the GMPS ATP-PPase domain; it reads WTPDAFVETT…LGIDDIILKR (191 aa). 221 to 227 lines the ATP pocket; it reads SGGVDSS.

Homodimer.

It catalyses the reaction XMP + L-glutamine + ATP + H2O = GMP + L-glutamate + AMP + diphosphate + 2 H(+). It participates in purine metabolism; GMP biosynthesis; GMP from XMP (L-Gln route): step 1/1. In terms of biological role, catalyzes the synthesis of GMP from XMP. The polypeptide is GMP synthase [glutamine-hydrolyzing] (Cytophaga hutchinsonii (strain ATCC 33406 / DSM 1761 / CIP 103989 / NBRC 15051 / NCIMB 9469 / D465)).